The sequence spans 354 residues: Guanine nucleotide-binding protein G(i) subunit alpha (354 aa).

The N-myristoyl glycine moiety is linked to residue Gly2. Cys3 carries S-palmitoyl cysteine lipidation. Residues 32-354 (REVKLLLLGA…KNNLKDCGLF (323 aa)) form the G-alpha domain. The segment at 35–48 (KLLLLGAGESGKST) is G1 motif. Residues 40–47 (GAGESGKS), 175–181 (LRTRVKT), 200–204 (DVGGQ), 269–272 (NKKD), and Ala326 each bind GTP. Positions 47 and 181 each coordinate Mg(2+). The tract at residues 173–181 (DVLRTRVKT) is G2 motif. The G3 motif stretch occupies residues 196–205 (FKMFDVGGQR). The G4 motif stretch occupies residues 265-272 (ILFLNKKD). Residues 324 to 329 (TCATDT) are G5 motif.

Belongs to the G-alpha family. G(i/o/t/z) subfamily. As to quaternary structure, g proteins are composed of 3 units; alpha, beta and gamma. The alpha chain contains the guanine nucleotide binding site.

Guanine nucleotide-binding proteins (G proteins) are involved as modulators or transducers in various transmembrane signaling systems. The G(i) proteins are involved in hormonal regulation of adenylate cyclase: they inhibit the cyclase in response to beta-adrenergic stimuli. This is Guanine nucleotide-binding protein G(i) subunit alpha from Lymnaea stagnalis (Great pond snail).